A 138-amino-acid chain; its full sequence is Nucleoside diphosphate kinase (138 aa).

6 residues coordinate ATP: lysine 9, phenylalanine 57, arginine 85, threonine 91, arginine 102, and asparagine 112. Histidine 115 (pros-phosphohistidine intermediate) is an active-site residue.

It belongs to the NDK family. In terms of assembly, homotetramer. The cofactor is Mg(2+).

Its subcellular location is the cytoplasm. The enzyme catalyses a 2'-deoxyribonucleoside 5'-diphosphate + ATP = a 2'-deoxyribonucleoside 5'-triphosphate + ADP. It catalyses the reaction a ribonucleoside 5'-diphosphate + ATP = a ribonucleoside 5'-triphosphate + ADP. In terms of biological role, major role in the synthesis of nucleoside triphosphates other than ATP. The ATP gamma phosphate is transferred to the NDP beta phosphate via a ping-pong mechanism, using a phosphorylated active-site intermediate. In Desulforapulum autotrophicum (strain ATCC 43914 / DSM 3382 / VKM B-1955 / HRM2) (Desulfobacterium autotrophicum), this protein is Nucleoside diphosphate kinase.